The chain runs to 310 residues: MSVKNGLVQLENLTSMENLSIDEVMGLIKRASAFKAGKADFALDEQTFASNLFFENSTRTHHSFHIAERKLGLDVLEFDAQASSISKGETLYDTVLTLDALGVDICVIRSGVEHYYEELVNSDNIHCAIVNGGDGSGQHPSQCLLDLMTIYEEFGKFEGLKIAISGDLTHSRVAKSNMMMLQKLGARLYFTGPAAWYSEEFDDYGHYANLDRILPELDVHMLLRVQHERHDSGESFSKEGYHTHFGLTQERAKMLKPTAIIMHPAPVNRDVEIADSLVESPQSRIVQQMSNGVYTRMAILEAILAGKKAK.

Arg-59 and Thr-60 together coordinate carbamoyl phosphate. Lys-87 is an L-aspartate binding site. Residues Arg-109, His-139, and Gln-142 each coordinate carbamoyl phosphate. The L-aspartate site is built by Arg-172 and Arg-224. The carbamoyl phosphate site is built by Ala-265 and Pro-266.

It belongs to the aspartate/ornithine carbamoyltransferase superfamily. ATCase family. In terms of assembly, heterododecamer (2C3:3R2) of six catalytic PyrB chains organized as two trimers (C3), and six regulatory PyrI chains organized as three dimers (R2).

The enzyme catalyses carbamoyl phosphate + L-aspartate = N-carbamoyl-L-aspartate + phosphate + H(+). It participates in pyrimidine metabolism; UMP biosynthesis via de novo pathway; (S)-dihydroorotate from bicarbonate: step 2/3. Catalyzes the condensation of carbamoyl phosphate and aspartate to form carbamoyl aspartate and inorganic phosphate, the committed step in the de novo pyrimidine nucleotide biosynthesis pathway. The chain is Aspartate carbamoyltransferase catalytic subunit from Lactococcus lactis subsp. cremoris (strain MG1363).